A 315-amino-acid polypeptide reads, in one-letter code: Tyrosine--tRNA ligase (315 aa).

Residue Tyr-32 coordinates L-tyrosine. A 'HIGH' region motif is present at residues 37-45; sequence PSGEIHLGH. L-tyrosine-binding residues include Tyr-152, Gln-156, Asp-159, and Gln-174. Residues 208–212 carry the 'KMSKS' region motif; the sequence is KMSSS. Residue Ser-211 coordinates ATP.

It belongs to the class-I aminoacyl-tRNA synthetase family. TyrS type 3 subfamily. As to quaternary structure, homodimer.

It localises to the cytoplasm. It carries out the reaction tRNA(Tyr) + L-tyrosine + ATP = L-tyrosyl-tRNA(Tyr) + AMP + diphosphate + H(+). Functionally, catalyzes the attachment of tyrosine to tRNA(Tyr) in a two-step reaction: tyrosine is first activated by ATP to form Tyr-AMP and then transferred to the acceptor end of tRNA(Tyr). This Methanoculleus marisnigri (strain ATCC 35101 / DSM 1498 / JR1) protein is Tyrosine--tRNA ligase.